Here is a 202-residue protein sequence, read N- to C-terminus: MNFLRKIVKNCKDEEIPKPGTPSAPPDDDDLWMPPPEYVPLTQIKGKENVRNFCINGEIKICSPNGYSFRILRHILKSFDNVYSGNRRLIGVVKVVIGLVLSASPVPEGMNWVYKLRRTLIFQWAESHGPLEGEELEYSQEITWDDEAEFVSLQIRVSAKQCHIQGRLWCINMNSKACQLWADMGLKTQQSQEDENTSLLLE.

Positions Asp-13–Trp-32 are disordered. The PPXY motif motif lies at Pro-35–Tyr-38.

The protein belongs to the lyssavirus matrix protein family. In terms of assembly, homomultimer. Interacts with nucleoprotein and with the cytoplasmic domain of glycoprotein.

The protein resides in the virion membrane. The protein localises to the host endomembrane system. Functionally, plays a major role in assembly and budding of virion. Completely covers the ribonucleoprotein coil and keep it in condensed bullet-shaped form. Inhibits viral transcription and stimulates replication. Plays a major role in early induction of TRAIL-mediated apoptosis in infected neurons. This Lagos bat virus (LBV) protein is Matrix protein (M).